The chain runs to 102 residues: Small ribosomal subunit protein uS10 (102 aa).

The protein belongs to the universal ribosomal protein uS10 family. In terms of assembly, part of the 30S ribosomal subunit.

Functionally, involved in the binding of tRNA to the ribosomes. The protein is Small ribosomal subunit protein uS10 of Pediococcus pentosaceus (strain ATCC 25745 / CCUG 21536 / LMG 10740 / 183-1w).